The primary structure comprises 515 residues: Nuclear hormone receptor family member nhr-62 (515 aa).

The segment at residues 95-170 is a DNA-binding region (nuclear receptor); it reads NLVCVVCGDQ…AGMNPRAVQS (76 aa). 2 NR C4-type zinc fingers span residues 98–118 and 134–153; these read CVVCGDQAFGKHYGVNACNGC and CRFEGRCAIAKEHRNVCRAC. Positions 169-195 are disordered; that stretch reads QSERVEREQNGSPNQIEEDDYKDLSSP. The region spanning 225–509 is the NR LBD domain; it reads EMAKLSEQIV…YLCHEVQFIQ (285 aa). An AF-2 region spans residues 498 to 509; that stretch reads SEYLCHEVQFIQ.

The protein belongs to the nuclear hormone receptor family. Widely expressed at a low level in many tissues including the pharynx, sensory neurons, intestine, spermatheca, hypodermis, and excretory cell.

The protein localises to the nucleus. In terms of biological role, orphan nuclear hormone receptor. Required for metabolic and physiologic responses associated with dietary-restriction-induced longevity. Modulates triglyceride and lipid metabolism and autophagy, associated with dietary-restriction, probably acting via regulation of transcription of target genes. The protein is Nuclear hormone receptor family member nhr-62 (nhr-62) of Caenorhabditis elegans.